The sequence spans 411 residues: Arginine deiminase (411 aa).

Residue C401 is the Amidino-cysteine intermediate of the active site.

This sequence belongs to the arginine deiminase family.

The protein localises to the cytoplasm. It catalyses the reaction L-arginine + H2O = L-citrulline + NH4(+). The protein operates within amino-acid degradation; L-arginine degradation via ADI pathway; carbamoyl phosphate from L-arginine: step 1/2. The sequence is that of Arginine deiminase from Streptococcus equi subsp. equi (strain 4047).